The primary structure comprises 233 residues: NAD(P)H-hydrate epimerase (233 aa).

The region spanning 10-217 (AINVDLELFN…ALQRKYELNL (208 aa)) is the YjeF N-terminal domain. (6S)-NADPHX is bound at residue 60–64 (NNGGD). Asn-61 and Asp-125 together coordinate K(+). (6S)-NADPHX-binding positions include 129-135 (GFSFKPP) and Asp-158. K(+) is bound at residue Ser-161.

It belongs to the NnrE/AIBP family. K(+) serves as cofactor.

The enzyme catalyses (6R)-NADHX = (6S)-NADHX. It carries out the reaction (6R)-NADPHX = (6S)-NADPHX. Functionally, catalyzes the epimerization of the S- and R-forms of NAD(P)HX, a damaged form of NAD(P)H that is a result of enzymatic or heat-dependent hydration. This is a prerequisite for the S-specific NAD(P)H-hydrate dehydratase to allow the repair of both epimers of NAD(P)HX. This Drosophila grimshawi (Hawaiian fruit fly) protein is NAD(P)H-hydrate epimerase.